A 225-amino-acid polypeptide reads, in one-letter code: Ribonuclease 3 (225 aa).

One can recognise an RNase III domain in the interval 7–129; sequence LPRLGRILGY…IIGAIYLDAD (123 aa). E42 lines the Mg(2+) pocket. Residue D46 is part of the active site. 2 residues coordinate Mg(2+): D115 and E118. E118 is an active-site residue. The 71-residue stretch at 155–225 folds into the DRBM domain; it reads DPKTLLQEHL…AAEVLERIKK (71 aa).

Belongs to the ribonuclease III family. Homodimer. The cofactor is Mg(2+).

It localises to the cytoplasm. The enzyme catalyses Endonucleolytic cleavage to 5'-phosphomonoester.. Its function is as follows. Digests double-stranded RNA. Involved in the processing of primary rRNA transcript to yield the immediate precursors to the large and small rRNAs (23S and 16S). Processes some mRNAs, and tRNAs when they are encoded in the rRNA operon. Processes pre-crRNA and tracrRNA of type II CRISPR loci if present in the organism. The polypeptide is Ribonuclease 3 (Shewanella loihica (strain ATCC BAA-1088 / PV-4)).